The primary structure comprises 544 residues: Transcription factor bHLH119 (544 aa).

Disordered regions lie at residues 12-59 (NGQV…QPPR) and 185-208 (VAST…PPSV). The segment covering 15–29 (VVRTSQPQRPSSGKP) has biased composition (polar residues). Residues 50–59 (LPLPLLQPPR) show a composition bias toward pro residues. Phosphothreonine is present on Thr-269. At Ser-274 the chain carries Phosphoserine. Disordered regions lie at residues 342-364 (QGTE…MHNL) and 522-544 (QPPL…STSK). Residues 357 to 406 (RAADMHNLSERRRRERINERMKTLQELLPRCRKTDKVSMLEDVIEYVKSL) enclose the bHLH domain. Residues 522-535 (QPPLPLQGQPTSQP) show a composition bias toward low complexity. Phosphoserine is present on residues Ser-541 and Ser-543.

Homodimer.

It is found in the nucleus. This chain is Transcription factor bHLH119 (BHLH119), found in Arabidopsis thaliana (Mouse-ear cress).